Reading from the N-terminus, the 983-residue chain is Isoleucine--tRNA ligase (983 aa).

The 'HIGH' region signature appears at 61–71; that stretch reads PYANGELHVGH. Residue E608 coordinates L-isoleucyl-5'-AMP. A 'KMSKS' region motif is present at residues 649 to 653; it reads KMSKS. Position 652 (K652) interacts with ATP. Positions 952, 955, 972, and 975 each coordinate Zn(2+).

This sequence belongs to the class-I aminoacyl-tRNA synthetase family. IleS type 1 subfamily. As to quaternary structure, monomer. The cofactor is Zn(2+).

It is found in the cytoplasm. It catalyses the reaction tRNA(Ile) + L-isoleucine + ATP = L-isoleucyl-tRNA(Ile) + AMP + diphosphate. Its function is as follows. Catalyzes the attachment of isoleucine to tRNA(Ile). As IleRS can inadvertently accommodate and process structurally similar amino acids such as valine, to avoid such errors it has two additional distinct tRNA(Ile)-dependent editing activities. One activity is designated as 'pretransfer' editing and involves the hydrolysis of activated Val-AMP. The other activity is designated 'posttransfer' editing and involves deacylation of mischarged Val-tRNA(Ile). The chain is Isoleucine--tRNA ligase from Gloeobacter violaceus (strain ATCC 29082 / PCC 7421).